A 139-amino-acid chain; its full sequence is Putative pre-16S rRNA nuclease (139 aa).

This sequence belongs to the YqgF nuclease family.

It localises to the cytoplasm. Functionally, could be a nuclease involved in processing of the 5'-end of pre-16S rRNA. The polypeptide is Putative pre-16S rRNA nuclease (Streptococcus thermophilus (strain CNRZ 1066)).